The primary structure comprises 66 residues: Large ribosomal subunit protein bL33c (66 aa).

The protein belongs to the bacterial ribosomal protein bL33 family.

The protein localises to the plastid. Its subcellular location is the chloroplast. This chain is Large ribosomal subunit protein bL33c, found in Manihot esculenta (Cassava).